The sequence spans 483 residues: MPSITKQIMSGAKWTSISTMCITIIQIVQFALLGNMMTLTEFGLVGMITTVTVFAQIVLDMGFGAALIQRDDATERQLSTLYWLNIMTGVLLFVLLYVSSPVIAGFYQREELVFLVRILAIMFLIAPIGQQYQYMLQKQLHFNTLSKIEIFSNVLSFGYLAIAVFMMDAILAYVISQVLLQSSKGILYWAVYRKKWHPAFVFDLRGMKDFFSFGAFQLSSRLVNRLGANIDMILIGRFIGAEALGIYNLAYQIVTIPVLKINPIVTRVAFPIFAKNKYENSVIREGFLNMTKMLALVSFPLLIGLVSVSDAFITAVFGEKWLAAVPILNVLAIVGILRVLMNPNGSVLLAKGRADLAFYWDSGVLLLYGLSLFAAVQTGSLLTVAWVYAIISVVNFLIGRWLLAYVIKLNLSAYFQSIMKPFLITAAMGIIAFGVSLSTEHFSMQAEMRLAISVAAGALCYLFLLVKAYPQTKSKLLRKGRLS.

A run of 11 helical transmembrane segments spans residues 15–34, 41–63, 83–105, 112–134, 154–176, 294–316, 321–343, 356–378, 382–404, 411–433, and 448–470; these read TSIS…ALLG, EFGL…DMGF, WLNI…VIAG, LVFL…QYQY, VLSF…YVIS, LALV…ITAV, WLAA…LMNP, LAFY…AVQT, LTVA…WLLA, LSAY…IIAF, and MRLA…KAYP.

This sequence belongs to the polysaccharide synthase family.

It is found in the cell membrane. It functions in the pathway cell wall biogenesis; teichuronic acid biosynthesis. Functionally, might be involved in the translocation of teichuronic acid repeating units from the inner to the outer surface of the membrane. This Bacillus subtilis (strain 168) protein is Teichuronic acid biosynthesis protein TuaB (tuaB).